A 93-amino-acid chain; its full sequence is Large ribosomal subunit protein bL31 (93 aa).

Residues 68–93 (GSADAAADEKKTDAKNNNKDNTSKED) are disordered. Over residues 74–93 (ADEKKTDAKNNNKDNTSKED) the composition is skewed to basic and acidic residues.

Belongs to the bacterial ribosomal protein bL31 family. Type A subfamily. In terms of assembly, part of the 50S ribosomal subunit.

Its function is as follows. Binds the 23S rRNA. This is Large ribosomal subunit protein bL31 from Prochlorococcus marinus (strain MIT 9303).